A 352-amino-acid polypeptide reads, in one-letter code: N-acetyl-gamma-glutamyl-phosphate reductase (352 aa).

Cys156 is a catalytic residue.

It belongs to the NAGSA dehydrogenase family. Type 1 subfamily.

The protein localises to the cytoplasm. The catalysed reaction is N-acetyl-L-glutamate 5-semialdehyde + phosphate + NADP(+) = N-acetyl-L-glutamyl 5-phosphate + NADPH + H(+). It participates in amino-acid biosynthesis; L-arginine biosynthesis; N(2)-acetyl-L-ornithine from L-glutamate: step 3/4. Functionally, catalyzes the NADPH-dependent reduction of N-acetyl-5-glutamyl phosphate to yield N-acetyl-L-glutamate 5-semialdehyde. This is N-acetyl-gamma-glutamyl-phosphate reductase from Afipia carboxidovorans (strain ATCC 49405 / DSM 1227 / KCTC 32145 / OM5) (Oligotropha carboxidovorans).